We begin with the raw amino-acid sequence, 406 residues long: Arginine deiminase (406 aa).

Cys396 (amidino-cysteine intermediate) is an active-site residue.

This sequence belongs to the arginine deiminase family.

The protein resides in the cytoplasm. It catalyses the reaction L-arginine + H2O = L-citrulline + NH4(+). The protein operates within amino-acid degradation; L-arginine degradation via ADI pathway; carbamoyl phosphate from L-arginine: step 1/2. This is Arginine deiminase from Aliivibrio fischeri (strain ATCC 700601 / ES114) (Vibrio fischeri).